Reading from the N-terminus, the 508-residue chain is Phenylalanine--tRNA ligase alpha subunit (508 aa).

The residue at position 2 (A2) is an N-acetylalanine. S193 and S301 each carry phosphoserine. Position 311 is an N6-acetyllysine (K311). Residues T329, 372–374 (QIE), and Y412 contribute to the L-phenylalanine site. E414 provides a ligand contact to Mg(2+). L-phenylalanine is bound at residue F438.

The protein belongs to the class-II aminoacyl-tRNA synthetase family. Phe-tRNA synthetase alpha subunit type 2 subfamily. Heterotetramer; dimer of two heterodimers formed by FARSA and FARSB. It depends on Mg(2+) as a cofactor.

It localises to the cytoplasm. It carries out the reaction tRNA(Phe) + L-phenylalanine + ATP = L-phenylalanyl-tRNA(Phe) + AMP + diphosphate + H(+). The sequence is that of Phenylalanine--tRNA ligase alpha subunit (Farsa) from Mus musculus (Mouse).